The following is a 505-amino-acid chain: Deoxyguanosinetriphosphate triphosphohydrolase (505 aa).

The HD domain maps to 66–273 (RLTHSMEVQQ…MEAADDISYC (208 aa)).

Belongs to the dGTPase family. Type 1 subfamily. Homotetramer. Mg(2+) serves as cofactor.

It catalyses the reaction dGTP + H2O = 2'-deoxyguanosine + triphosphate + H(+). Its function is as follows. dGTPase preferentially hydrolyzes dGTP over the other canonical NTPs. The sequence is that of Deoxyguanosinetriphosphate triphosphohydrolase from Salmonella paratyphi A (strain AKU_12601).